The chain runs to 150 residues: L-alanine exporter AlaE (150 aa).

A run of 4 helical transmembrane segments spans residues 17-37, 48-68, 86-106, and 111-131; these read FAMV…VSGM, LSIP…DYVL, LVAY…TVGA, and IITA…LYGY.

The protein belongs to the AlaE exporter family.

The protein resides in the cell inner membrane. In terms of biological role, exports L-alanine. The protein is L-alanine exporter AlaE of Vibrio cholerae serotype O1 (strain ATCC 39315 / El Tor Inaba N16961).